The primary structure comprises 186 residues: NADH-quinone oxidoreductase subunit C (186 aa).

Positions 166-186 (DSLTPWKGVGRPSDPFDGRKE) are disordered.

Belongs to the complex I 30 kDa subunit family. As to quaternary structure, NDH-1 is composed of 14 different subunits. Subunits NuoB, C, D, E, F, and G constitute the peripheral sector of the complex.

Its subcellular location is the cell inner membrane. It catalyses the reaction a quinone + NADH + 5 H(+)(in) = a quinol + NAD(+) + 4 H(+)(out). Its function is as follows. NDH-1 shuttles electrons from NADH, via FMN and iron-sulfur (Fe-S) centers, to quinones in the respiratory chain. The immediate electron acceptor for the enzyme in this species is believed to be ubiquinone. Couples the redox reaction to proton translocation (for every two electrons transferred, four hydrogen ions are translocated across the cytoplasmic membrane), and thus conserves the redox energy in a proton gradient. This is NADH-quinone oxidoreductase subunit C from Neorickettsia sennetsu (strain ATCC VR-367 / Miyayama) (Ehrlichia sennetsu).